Consider the following 188-residue polypeptide: Elongation factor P (188 aa).

Lys-34 is modified (N6-(3,6-diaminohexanoyl)-5-hydroxylysine).

It belongs to the elongation factor P family. In terms of processing, may be beta-lysylated on the epsilon-amino group of Lys-34 by the combined action of EpmA and EpmB, and then hydroxylated on the C5 position of the same residue by EpmC (if this protein is present). Lysylation is critical for the stimulatory effect of EF-P on peptide-bond formation. The lysylation moiety may extend toward the peptidyltransferase center and stabilize the terminal 3-CCA end of the tRNA. Hydroxylation of the C5 position on Lys-34 may allow additional potential stabilizing hydrogen-bond interactions with the P-tRNA.

Its subcellular location is the cytoplasm. The protein operates within protein biosynthesis; polypeptide chain elongation. In terms of biological role, involved in peptide bond synthesis. Alleviates ribosome stalling that occurs when 3 or more consecutive Pro residues or the sequence PPG is present in a protein, possibly by augmenting the peptidyl transferase activity of the ribosome. Modification of Lys-34 is required for alleviation. This chain is Elongation factor P, found in Xanthomonas axonopodis pv. citri (strain 306).